The following is a 141-amino-acid chain: Large ribosomal subunit protein uL16 (141 aa).

Residues 1–23 (MLMPKRTKYRKQMKGRNRGKAHR) form a disordered region.

This sequence belongs to the universal ribosomal protein uL16 family. In terms of assembly, part of the 50S ribosomal subunit.

Functionally, binds 23S rRNA and is also seen to make contacts with the A and possibly P site tRNAs. The polypeptide is Large ribosomal subunit protein uL16 (Helicobacter pylori (strain P12)).